The primary structure comprises 196 residues: Penicillin-binding protein activator LpoB (196 aa).

A signal peptide spans 1-16 (MKKYLGIVLMALVIAG). A lipid anchor (N-palmitoyl cysteine) is attached at C17. A lipid anchor (S-diacylglycerol cysteine) is attached at C17. The interval 24-54 (TEQPATIEPAVPTPSKPQLPPSESQPLPTPP) is disordered. Residues 34–43 (VPTPSKPQLP) show a composition bias toward pro residues.

This sequence belongs to the LpoB family. Interacts with PBP1b.

The protein localises to the cell outer membrane. Its function is as follows. Regulator of peptidoglycan synthesis that is essential for the function of penicillin-binding protein 1B (PBP1b). This is Penicillin-binding protein activator LpoB from Dickeya dadantii (strain 3937) (Erwinia chrysanthemi (strain 3937)).